The primary structure comprises 176 residues: Calcium and integrin-binding family member 2 (176 aa).

EF-hand domains follow at residues 55 to 90 (RENP…LCES), 92 to 127 (PRDL…LTKS), and 133 to 168 (EVVL…APDF). Positions 105, 107, 109, 116, 146, 148, 150, 152, and 157 each coordinate Ca(2+).

In terms of assembly, monomer. Homodimer. Interacts with WHRN and MYO7A. Interacts with ITGA2B (via C-terminus cytoplasmic tail region); the interactions are stabilized/increased in a calcium and magnesium-dependent manner. Interacts with ITGA7 (via C-terminus cytoplasmic tail region); the interactions are stabilized/increased in a calcium and magnesium-dependent manner. Interacts with TMC1. Interacts with TMC2. Expressed in liver, heart, kidney, brain, spleen, stomach, ovary, testis and muscle.

Its subcellular location is the cytoplasm. The protein localises to the cell projection. The protein resides in the stereocilium. It is found in the photoreceptor inner segment. It localises to the cilium. Its subcellular location is the photoreceptor outer segment. The protein localises to the cell membrane. The protein resides in the sarcolemma. Its function is as follows. Calcium- and integrin-binding protein that plays a role in intracellular calcium homeostasis. Acts as an auxiliary subunit of the sensory mechanoelectrical transduction (MET) channel in hair cells. Essential for mechanoelectrical transduction (MET) currents in auditory hair cells and thereby required for hearing. Regulates the function of hair cell mechanotransduction by controlling the distribution of transmembrane channel-like proteins TMC1 and TMC2, and by regulating the function of the MET channels in hair cells. Required for the maintenance of auditory hair cell stereocilia bundle morphology and function and for hair-cell survival in the cochlea. Critical for proper photoreceptor cell maintenance and function. Plays a role in intracellular calcium homeostasis by decreasing ATP-induced calcium release. This Ovis aries (Sheep) protein is Calcium and integrin-binding family member 2 (CIB2).